Consider the following 1187-residue polypeptide: MPRRAGSGQLPLPRGWEEARDYDGKVFYIDHNTRRTSWIDPRDRLTKPLSFADCVGDELPWGWEAGFDPQIGAYYIDHINKTTQIEDPRKQWRGEQEKMLKDYLSVAQDALRTQKELYHVKEQRLALALDEYVRLNDAYKEKSSSHTSLFSGSSSSTKYDPDILKAEISTTQLRVKKLKRELSHMKQELLYKQQGFETLQQIDEKMSGGQSGYELNEAKAILTELKSIRKAISSGEKEKQDLMQSLAKLQERFHLDQNMGSSEPDLRSSPVNSHLSLSRQTLDAGSQTSISGDIGVRSRSNLAEKVRLSLQYEEAKRSMANLKIELSKLDGEAWPGALDIEKEKLMLINEKEELLKELQFITPQKRSQEELERLEAERQHLEEELMAARGSPSRALTERLKLEEKRKELLQKLEETTKLTTSLYSQLQSLSSSTLSMSSGSSLGSLASSRGSLNTSSRGSLNSLSSSELYYSSQGDQMDTDYQYKLDFLLQEKGGYIPSGPITTIHENEVVKSPSQPGQSGLCGVGVTASSHTTPLTEASKSVASLSSRSSLSSLSPPGSPLVLDSVFPGSSHDTSPHQFPTDFEDCELSRRFADVGLGENQALLDSDSGGASQPLLEDKGLSDCPGELLCEGATDVEKSLPKRRGLHLRGDKTTRVSAAASDESVAGDSGVYEASMKQPGEMEDVPYSEEDVTIVETAQVQIGLRYDTKSSSFMVIIAQLRNLHAFSIPHSSKVYFRVALLPSSADVSCLFRTKVHPPTESVLYNDVFRVAVSQAALQQKTLRVDLCSASKHRREECLAGTQISLADLPFSNEIFMLWYNLLPSKQMPCKKNEDGNEEPGARSQQPMLDPIDLDAVSALLARTSAELLAVEQELAQEEEEEELRPERRGPGRDCLTMLREASDEPAALRESGVPLAEGSRCTEDPKPCPRGPETSQCRKEPAEDPGQLPSGLPTLVDKETNTDEVVDSNMAVRPKDRSSLSSRQHPFVRNSVIVRSQTFSPGERSQYICRLNRSDSDSSTLAKKSLFVRNSTERRSLRVKRAVCQPTLRRTAQECPVRTSLDLELDLQASLTRQSRLNDELQALRGLRQKLEELKAQGETDLPPGVLEDERFQKLLKQAEKQAEQTKEEQKQDLNAERLMRQVSKDVCRLREQSQKEPRQVQSFREKIAYFTRAKISIPSLPADDV.

WW domains lie at 10–43 (LPLP…DPRD) and 57–90 (DELP…DPRK). 2 coiled-coil regions span residues 121 to 194 (KEQR…YKQQ) and 224 to 256 (ELKS…FHLD). A Phosphoserine modification is found at Ser-286. The stretch at 302–423 (LAEKVRLSLQ…EETTKLTTSL (122 aa)) forms a coiled coil. The interval 438–464 (SSGSSLGSLASSRGSLNTSSRGSLNSL) is disordered. A C2 domain is found at 697–820 (ETAQVQIGLR…FSNEIFMLWY (124 aa)). Disordered stretches follow at residues 830-849 (CKKN…QPML) and 874-963 (ELAQ…ETNT). The stretch at 859–885 (ALLARTSAELLAVEQELAQEEEEEELR) forms a coiled coil. Residues 875 to 884 (LAQEEEEEEL) show a composition bias toward acidic residues. A Phosphothreonine modification is found at Thr-999. Ser-1017 is modified (phosphoserine). Residues 1026–1045 (SLFVRNSTERRSLRVKRAVC) form an interaction with PRKCZ region. The stretch at 1063-1143 (DLELDLQASL…DLNAERLMRQ (81 aa)) forms a coiled coil.

This sequence belongs to the WWC family. Forms homodimers and heterodimers with WWC1 and WWC3. Interacts with DLC1 and PRKCZ. Interacts (via WW domains) with LATS1 and LATS2.

The protein localises to the cytoplasm. The protein resides in the cytosol. Regulator of the Hippo signaling pathway, also known as the Salvador-Warts-Hippo (SWH) pathway. Enhances phosphorylation of LATS1 and YAP1 and negatively regulates cell proliferation and organ growth due to a suppression of the transcriptional activity of YAP1, the major effector of the Hippo pathway. This Mus musculus (Mouse) protein is Protein WWC2 (Wwc2).